A 250-amino-acid polypeptide reads, in one-letter code: Maleate isomerase (250 aa).

Substrate contacts are provided by residues N15, 80-82, Y137, and N167; that span reads CLV. The active-site Nucleophile is the C80. The residue at position 80 (C80) is an S-(2-succinyl)cysteine. C198 functions as the Proton donor in the catalytic mechanism. Residue 199 to 200 participates in substrate binding; sequence VQ.

This sequence belongs to the maleate isomerase family. Homodimer.

It carries out the reaction maleate = fumarate. It functions in the pathway cofactor degradation; nicotinate degradation. Its function is as follows. Catalyzes cis-trans isomerization of the C2-C3 double bond in maleate to yield fumarate in the aerobic nicotinate degradation pathway. The sequence is that of Maleate isomerase from Pseudomonas putida (strain ATCC 47054 / DSM 6125 / CFBP 8728 / NCIMB 11950 / KT2440).